We begin with the raw amino-acid sequence, 507 residues long: Peroxisomal membrane protein PEX14 (507 aa).

Composition is skewed to polar residues over residues 1–10 (MATHQQTQPP) and 32–48 (EVQQ…SVFK). The segment at 1–52 (MATHQQTQPPSDFPALADENSQIPEATKPANEVQQATIAQDPPTSVFKNSEP) is disordered. The Peroxisomal portion of the chain corresponds to 1–152 (MATHQQTQPP…QAAFLSRFRW (152 aa)). Involved in interaction with PEX5 stretches follow at residues 58–65 (IQNAIKFL) and 78–97 (RRSF…EAFR). The chain crosses the membrane as a helical span at residues 153–173 (YHAILAVGVLAASGAGTAVFI). At 174 to 507 (KRSLIPRFKS…EQQHISQEGN (334 aa)) the chain is on the cytoplasmic side. Polar residues predominate over residues 288-302 (VTTARKPYTNGSNVD). Disordered regions lie at residues 288-329 (VTTA…PKSY), 344-394 (NIRE…NPRS), 409-435 (ANQN…QPPP), and 448-507 (PKPQ…QEGN). A compositionally biased stretch (low complexity) spans 308–322 (ARSASPPAAPADSSA). Polar residues predominate over residues 378-394 (QDESSNGQWWQQKNPRS).

It belongs to the peroxin-14 family. Interacts with PEX13; forming the PEX13-PEX14 docking complex. Interacts with PEX5 (via WxxxF/Y motifs). In terms of tissue distribution, expressed in flowers, siliques, leaves and roots.

Its subcellular location is the peroxisome membrane. Its function is as follows. Component of the PEX13-PEX14 docking complex, a translocon channel that specifically mediates the import of peroxisomal cargo proteins bound to PEX5 receptor. The PEX13-PEX14 docking complex forms a large import pore which can be opened to a diameter of about 9 nm. Mechanistically, PEX5 receptor along with cargo proteins associates with the PEX14 subunit of the PEX13-PEX14 docking complex in the cytosol, leading to the insertion of the receptor into the organelle membrane with the concomitant translocation of the cargo into the peroxisome matrix. This is Peroxisomal membrane protein PEX14 from Arabidopsis thaliana (Mouse-ear cress).